Consider the following 487-residue polypeptide: 2-aminomuconic semialdehyde dehydrogenase (487 aa).

231–236 is a binding site for NAD(+); sequence GSTATA. Catalysis depends on glutamate 253, which acts as the Proton acceptor. Cysteine 287 acts as the Nucleophile in catalysis.

This sequence belongs to the aldehyde dehydrogenase family.

The protein resides in the cytoplasm. The catalysed reaction is 2-aminomuconate 6-semialdehyde + NAD(+) + H2O = (2Z,4E)-2-aminomuconate + NADH + 2 H(+). It participates in amino-acid degradation; L-kynurenine degradation. In terms of biological role, catalyzes the NAD-dependent oxidation of 2-aminomuconic semialdehyde of the kynurenine metabolic pathway in L-tryptophan degradation. The chain is 2-aminomuconic semialdehyde dehydrogenase (aldh8a1) from Danio rerio (Zebrafish).